Consider the following 301-residue polypeptide: MENIPTVGLGTWKASPGEVTDAVKLAINLGYRHFDCAYLYHNESEVGMGISEKIKEGVVKREDLFVVSKLWCTCHKKSLVKTACTNTLEALNLDYLDLYLIHWPMGFKPGEKDIPLDRNGKVIPSHTSFLDTWEAMEDLVFEGLVKNLGVSNFNHEQLERLLDKPGLRVRPITNQIECHPYLNQKKLIDFCHKRNVSVTAYRPLGGSGGGFHLMDDTVIRKIAKKHGKSPAQILIRFQIQRNLIVIPKSVTPSRIRENIQVFDFELTEKDMEELLSLDKNLRLATFPTTENHQDYPFHIEY.

Asp35 contributes to the NADP(+) binding site. The active-site Proton donor is the Tyr40. His102 is a substrate binding site. Residues Gln175 and Ile246–Asn258 each bind NADP(+).

The protein belongs to the aldo/keto reductase family. In terms of assembly, monomer.

It localises to the cytoplasm. The catalysed reaction is 1,5-anhydro-D-glucitol + NADP(+) = 1,5-anhydro-D-fructose + NADPH + H(+). Its activity is regulated as follows. Inhibited by p-chloromercuribenzoic acid and alkyliodines. Its function is as follows. Catalyzes the NADPH-dependent reduction of 1,5-anhydro-D-fructose (AF) to 1,5-anhydro-D-glucitol. In Mus musculus (Mouse), this protein is 1,5-anhydro-D-fructose reductase (Akr1e2).